A 180-amino-acid polypeptide reads, in one-letter code: NADH-quinone oxidoreductase subunit I (180 aa).

4Fe-4S ferredoxin-type domains follow at residues 50–80 (LTRDPDGEERCVACNLCAVACPVGCISLQKA) and 90–119 (EFFRINFSRCIFCGLCEEACPTTAIQLTPD). 8 residues coordinate [4Fe-4S] cluster: cysteine 60, cysteine 63, cysteine 66, cysteine 70, cysteine 99, cysteine 102, cysteine 105, and cysteine 109.

The protein belongs to the complex I 23 kDa subunit family. In terms of assembly, NDH-1 is composed of 13 different subunits. Subunits NuoA, H, J, K, L, M, N constitute the membrane sector of the complex. It depends on [4Fe-4S] cluster as a cofactor.

The protein resides in the cell inner membrane. The catalysed reaction is a quinone + NADH + 5 H(+)(in) = a quinol + NAD(+) + 4 H(+)(out). Functionally, NDH-1 shuttles electrons from NADH, via FMN and iron-sulfur (Fe-S) centers, to quinones in the respiratory chain. The immediate electron acceptor for the enzyme in this species is believed to be ubiquinone. Couples the redox reaction to proton translocation (for every two electrons transferred, four hydrogen ions are translocated across the cytoplasmic membrane), and thus conserves the redox energy in a proton gradient. The protein is NADH-quinone oxidoreductase subunit I of Shigella sonnei (strain Ss046).